Here is a 181-residue protein sequence, read N- to C-terminus: ATP synthase subunit delta (181 aa).

It belongs to the ATPase delta chain family. In terms of assembly, F-type ATPases have 2 components, F(1) - the catalytic core - and F(0) - the membrane proton channel. F(1) has five subunits: alpha(3), beta(3), gamma(1), delta(1), epsilon(1). F(0) has three main subunits: a(1), b(2) and c(10-14). The alpha and beta chains form an alternating ring which encloses part of the gamma chain. F(1) is attached to F(0) by a central stalk formed by the gamma and epsilon chains, while a peripheral stalk is formed by the delta and b chains.

It localises to the cell inner membrane. In terms of biological role, f(1)F(0) ATP synthase produces ATP from ADP in the presence of a proton or sodium gradient. F-type ATPases consist of two structural domains, F(1) containing the extramembraneous catalytic core and F(0) containing the membrane proton channel, linked together by a central stalk and a peripheral stalk. During catalysis, ATP synthesis in the catalytic domain of F(1) is coupled via a rotary mechanism of the central stalk subunits to proton translocation. Its function is as follows. This protein is part of the stalk that links CF(0) to CF(1). It either transmits conformational changes from CF(0) to CF(1) or is implicated in proton conduction. This chain is ATP synthase subunit delta, found in Fervidobacterium nodosum (strain ATCC 35602 / DSM 5306 / Rt17-B1).